A 530-amino-acid polypeptide reads, in one-letter code: Negative elongation factor A (530 aa).

Residues 89 to 248 (WVLMVADILK…TPIPPSRTPL (160 aa)) form the HDAg domain. The segment at 125 to 188 (REKVSECEAS…LQKSTETAQQ (64 aa)) is NELF-C/D-binding. T157 is modified (phosphothreonine). The tract at residues 189–248 (LKRSAGVPFHAKGRGLLRKMDTTTPLKGIPKQAPFRSPTTPSVFSPSGNRTPIPPSRTPL) is RNAPII-binding. Disordered stretches follow at residues 213 to 248 (PLKG…RTPL), 266 to 296 (GAGR…VENA), and 312 to 409 (SLNS…TAQT). Residues S225 and S233 each carry the phosphoserine modification. A compositionally biased stretch (polar residues) spans 225-238 (SPTTPSVFSPSGNR). At T277 the chain carries Phosphothreonine. The segment covering 277–291 (TLDTEVVEKPTKEET) has biased composition (basic and acidic residues). Residues 315–341 (SEPTLPSTSYLPSTPSVVPASSYIPSS) are compositionally biased toward low complexity. Phosphoserine is present on S363.

Belongs to the NELF-A family. The NELF complex is composed of NELFA, NELFB, NELFCD and NELFE; NELFA and NELFCD form a stable subcomplex that binds to the N-terminus of NELFB. In vitro, the NELFA:NELFCD subcomplex binds to ssDNA and ssRNA in a sequence- and structure-dependent manner. Interacts with the RNA polymerase II complex when it is not phosphorylated by P-TEFb. Interacts with NELFB. In terms of tissue distribution, ubiquitous. Expressed in brain, heart, spleen, lung, liver, muscle, kidney and testis. Already expressed in 7 dpc embryos.

The protein resides in the nucleus. Essential component of the NELF complex, a complex that negatively regulates the elongation of transcription by RNA polymerase II. The NELF complex, which acts via an association with the DSIF complex and causes transcriptional pausing, is counteracted by the P-TEFb kinase complex. This Mus musculus (Mouse) protein is Negative elongation factor A (Nelfa).